Consider the following 514-residue polypeptide: Peptide chain release factor 3 (514 aa).

A tr-type G domain is found at 8 to 268 (KKRRTFAIIS…TFLEFAPEPH (261 aa)). GTP is bound by residues 17 to 24 (SHPDAGKT), 85 to 89 (DTPGH), and 139 to 142 (NKLD).

It belongs to the TRAFAC class translation factor GTPase superfamily. Classic translation factor GTPase family. PrfC subfamily.

The protein localises to the cytoplasm. Its function is as follows. Increases the formation of ribosomal termination complexes and stimulates activities of RF-1 and RF-2. It binds guanine nucleotides and has strong preference for UGA stop codons. It may interact directly with the ribosome. The stimulation of RF-1 and RF-2 is significantly reduced by GTP and GDP, but not by GMP. The sequence is that of Peptide chain release factor 3 from Streptococcus pyogenes serotype M18 (strain MGAS8232).